The following is a 247-amino-acid chain: MAGHSKWANIKFRKGVQDAKRGKIFTKLIREITVAARMGGGDESSNPRLRDAVKKALNANMKRDTIDNAVKRGVGGVDGEAMIAMRYEGYGPGGVAILVDCLSDNKNRTVSEVRHAFSKHGGNLGTDGSVSYLFTNQGEILMASNQPEDKVMEIAIDAGASDVAVEDGQIEIITPVEAYHTVLNALQDAGLEVEQSHLTMRAQTLVPINDETAESLIKLIDMLEDLDDVQEVYSNAEFSEKILESMN.

It belongs to the TACO1 family.

Its subcellular location is the cytoplasm. The chain is Probable transcriptional regulatory protein lpg1286 from Legionella pneumophila subsp. pneumophila (strain Philadelphia 1 / ATCC 33152 / DSM 7513).